The sequence spans 395 residues: S-adenosylmethionine synthase (395 aa).

Histidine 15 is a binding site for ATP. Aspartate 17 is a binding site for Mg(2+). Glutamate 43 provides a ligand contact to K(+). Residues glutamate 56 and glutamine 99 each coordinate L-methionine. The segment at glutamine 99–glutamate 109 is flexible loop. ATP contacts are provided by residues aspartate 173 to lysine 175, arginine 239 to phenylalanine 240, aspartate 248, arginine 254 to lysine 255, alanine 271, and lysine 275. Position 248 (aspartate 248) interacts with L-methionine. Lysine 279 serves as a coordination point for L-methionine.

It belongs to the AdoMet synthase family. Homotetramer; dimer of dimers. It depends on Mg(2+) as a cofactor. Requires K(+) as cofactor.

It localises to the cytoplasm. It catalyses the reaction L-methionine + ATP + H2O = S-adenosyl-L-methionine + phosphate + diphosphate. Its pathway is amino-acid biosynthesis; S-adenosyl-L-methionine biosynthesis; S-adenosyl-L-methionine from L-methionine: step 1/1. Functionally, catalyzes the formation of S-adenosylmethionine (AdoMet) from methionine and ATP. The overall synthetic reaction is composed of two sequential steps, AdoMet formation and the subsequent tripolyphosphate hydrolysis which occurs prior to release of AdoMet from the enzyme. In Desulforudis audaxviator (strain MP104C), this protein is S-adenosylmethionine synthase.